The chain runs to 192 residues: Large ribosomal subunit protein bL9 (192 aa).

The segment at 172-192 (DALRPEDFFDPEADGVDEDEA) is disordered. Over residues 179–192 (FFDPEADGVDEDEA) the composition is skewed to acidic residues.

The protein belongs to the bacterial ribosomal protein bL9 family.

Its function is as follows. Binds to the 23S rRNA. This Rhizobium leguminosarum bv. trifolii (strain WSM2304) protein is Large ribosomal subunit protein bL9.